Reading from the N-terminus, the 339-residue chain is NmrA-like family domain-containing oxidoreductase cpsB (339 aa).

Lys-142 contributes to the NADP(+) binding site.

It belongs to the NmrA-type oxidoreductase family.

The enzyme catalyses didehydrocampesine A + 2 AH2 = campesine A + 2 A. It functions in the pathway alkaloid biosynthesis. Oxidoreductase; part of the gene cluster that mediates the biosynthesis of campesine G, a dimeric indole piperazine alkaloid that shows good insecticidal activity Galleria mellonella. Within the pathway, cpsB reduces the unstable (S,S)-trypyl-valyl dihydropiperazine (didehydrocampesine A) intermediate to (S, S)-trypyl-valyl-piperazine (campesine A) using two equivalents of NAD(P)H. The non-canonical non-ribosomal peptide synthetase cpsA catalyzes the first steps of the pathway by producing L-tryptophanal and L-valinal from their respective amino-acids. These products condensate spontaneously to form trypyl-valyl pyrazine also known as didehydrocampesine A. The NmrA-like family domain-containing oxidoreductase cpsB is the next enzyme in cps pathway and reduces the unstable didehydrocampesine A to campesine A. The methyltransferase cpsF and the acetyltransferase cpsE both recognize N13 of piperazine ring to carry out methylation and acetylation of campesine A to produce campesine C and B, respectively. The cytochrome P450 monooxygenase cpsD then acts as a dimerase that catalyzes oxidative heterocoupling between campesine B and C to produce heterodimers with unexpected 6/5/6/6/6/6/5/6 eight-ring scaffold called campesine D. Finally,the cytochrome P450 monooxygenase cpsC is a regioselective dehydrogenase that catalyzes dehydrogenation reaction towards C2-N1 to produce campesine G. The chain is NmrA-like family domain-containing oxidoreductase cpsB from Aspergillus campestris (strain IBT 28561).